Consider the following 258-residue polypeptide: Imidazole glycerol phosphate synthase subunit HisF (258 aa).

Catalysis depends on residues aspartate 11 and aspartate 130.

Belongs to the HisA/HisF family. Heterodimer of HisH and HisF.

Its subcellular location is the cytoplasm. The catalysed reaction is 5-[(5-phospho-1-deoxy-D-ribulos-1-ylimino)methylamino]-1-(5-phospho-beta-D-ribosyl)imidazole-4-carboxamide + L-glutamine = D-erythro-1-(imidazol-4-yl)glycerol 3-phosphate + 5-amino-1-(5-phospho-beta-D-ribosyl)imidazole-4-carboxamide + L-glutamate + H(+). It participates in amino-acid biosynthesis; L-histidine biosynthesis; L-histidine from 5-phospho-alpha-D-ribose 1-diphosphate: step 5/9. IGPS catalyzes the conversion of PRFAR and glutamine to IGP, AICAR and glutamate. The HisF subunit catalyzes the cyclization activity that produces IGP and AICAR from PRFAR using the ammonia provided by the HisH subunit. The polypeptide is Imidazole glycerol phosphate synthase subunit HisF (Shigella flexneri serotype 5b (strain 8401)).